A 167-amino-acid chain; its full sequence is Endoribonuclease YbeY (167 aa).

Zn(2+)-binding residues include H125, H129, and H135.

This sequence belongs to the endoribonuclease YbeY family. Zn(2+) serves as cofactor.

It localises to the cytoplasm. Single strand-specific metallo-endoribonuclease involved in late-stage 70S ribosome quality control and in maturation of the 3' terminus of the 16S rRNA. This is Endoribonuclease YbeY from Allorhizobium ampelinum (strain ATCC BAA-846 / DSM 112012 / S4) (Agrobacterium vitis (strain S4)).